The following is a 309-amino-acid chain: Thiamine-monophosphate kinase (309 aa).

Positions 25, 39, 40, and 41 each coordinate Mg(2+). Residue Asp48 participates in substrate binding. Mg(2+) is bound by residues Asp69 and Asp117. Residues 116-117 (GD) and Arg140 contribute to the ATP site. A Mg(2+)-binding site is contributed by Asp201. Ser203 provides a ligand contact to ATP. Asp204 contacts Mg(2+). The substrate site is built by Glu250 and Trp298.

This sequence belongs to the thiamine-monophosphate kinase family.

The catalysed reaction is thiamine phosphate + ATP = thiamine diphosphate + ADP. It functions in the pathway cofactor biosynthesis; thiamine diphosphate biosynthesis; thiamine diphosphate from thiamine phosphate: step 1/1. In terms of biological role, catalyzes the ATP-dependent phosphorylation of thiamine-monophosphate (TMP) to form thiamine-pyrophosphate (TPP), the active form of vitamin B1. This is Thiamine-monophosphate kinase from Pyrococcus horikoshii (strain ATCC 700860 / DSM 12428 / JCM 9974 / NBRC 100139 / OT-3).